A 712-amino-acid polypeptide reads, in one-letter code: Glucans biosynthesis glucosyltransferase H (712 aa).

Helical transmembrane passes span 57 to 77, 89 to 109, 408 to 428, 462 to 482, 552 to 572, and 573 to 593; these read LAIM…MYQV, IVLA…VSAL, GIGS…GILI, FAGT…LVVI, YAAP…VSWP, and LLLW…VALL.

The protein belongs to the glycosyltransferase 2 family. OpgH subfamily.

The protein resides in the cell inner membrane. Its pathway is glycan metabolism; osmoregulated periplasmic glucan (OPG) biosynthesis. In terms of biological role, involved in the biosynthesis of osmoregulated periplasmic glucans (OPGs). The protein is Glucans biosynthesis glucosyltransferase H of Rhodopseudomonas palustris (strain BisA53).